Reading from the N-terminus, the 473-residue chain is Photosystem II CP43 reaction center protein (473 aa).

A propeptide spanning residues 1-14 (MKTLYSLRRFYHVE) is cleaved from the precursor. Thr-15 is modified (N-acetylthreonine). Phosphothreonine is present on Thr-15. The next 5 helical transmembrane spans lie at 69–93 (LFEV…PHLA), 134–155 (LIGP…RDKN), 178–200 (KAIY…RIID), 255–275 (KPFA…LSYS), and 291–312 (WYNN…ASQS). Glu-367 serves as a coordination point for [CaMn4O5] cluster. Residues 447–471 (RARAAAAGFEKGINRENEPVLTLRP) form a helical membrane-spanning segment.

Belongs to the PsbB/PsbC family. PsbC subfamily. In terms of assembly, PSII is composed of 1 copy each of membrane proteins PsbA, PsbB, PsbC, PsbD, PsbE, PsbF, PsbH, PsbI, PsbJ, PsbK, PsbL, PsbM, PsbT, PsbX, PsbY, PsbZ, Psb30/Ycf12, at least 3 peripheral proteins of the oxygen-evolving complex and a large number of cofactors. It forms dimeric complexes. The cofactor is Binds multiple chlorophylls and provides some of the ligands for the Ca-4Mn-5O cluster of the oxygen-evolving complex. It may also provide a ligand for a Cl- that is required for oxygen evolution. PSII binds additional chlorophylls, carotenoids and specific lipids..

The protein resides in the plastid. The protein localises to the chloroplast thylakoid membrane. One of the components of the core complex of photosystem II (PSII). It binds chlorophyll and helps catalyze the primary light-induced photochemical processes of PSII. PSII is a light-driven water:plastoquinone oxidoreductase, using light energy to abstract electrons from H(2)O, generating O(2) and a proton gradient subsequently used for ATP formation. The sequence is that of Photosystem II CP43 reaction center protein from Guillardia theta (Cryptophyte).